An 83-amino-acid polypeptide reads, in one-letter code: Large ribosomal subunit protein eL31 (83 aa).

Belongs to the eukaryotic ribosomal protein eL31 family.

The sequence is that of Large ribosomal subunit protein eL31 from Methanococcus aeolicus (strain ATCC BAA-1280 / DSM 17508 / OCM 812 / Nankai-3).